A 365-amino-acid polypeptide reads, in one-letter code: Methylthioribose-1-phosphate isomerase (365 aa).

Residues 53–55, Arg-90, and Gln-201 each bind substrate; that span reads RGA. Asp-242 serves as the catalytic Proton donor. 252 to 253 provides a ligand contact to substrate; sequence NK.

The protein belongs to the eIF-2B alpha/beta/delta subunits family. MtnA subfamily.

The enzyme catalyses 5-(methylsulfanyl)-alpha-D-ribose 1-phosphate = 5-(methylsulfanyl)-D-ribulose 1-phosphate. It functions in the pathway amino-acid biosynthesis; L-methionine biosynthesis via salvage pathway; L-methionine from S-methyl-5-thio-alpha-D-ribose 1-phosphate: step 1/6. Its function is as follows. Catalyzes the interconversion of methylthioribose-1-phosphate (MTR-1-P) into methylthioribulose-1-phosphate (MTRu-1-P). The protein is Methylthioribose-1-phosphate isomerase of Methylorubrum populi (strain ATCC BAA-705 / NCIMB 13946 / BJ001) (Methylobacterium populi).